The sequence spans 95 residues: Co-chaperonin GroES (95 aa).

Belongs to the GroES chaperonin family. As to quaternary structure, heptamer of 7 subunits arranged in a ring. Interacts with the chaperonin GroEL.

It localises to the cytoplasm. Functionally, together with the chaperonin GroEL, plays an essential role in assisting protein folding. The GroEL-GroES system forms a nano-cage that allows encapsulation of the non-native substrate proteins and provides a physical environment optimized to promote and accelerate protein folding. GroES binds to the apical surface of the GroEL ring, thereby capping the opening of the GroEL channel. The sequence is that of Co-chaperonin GroES from Geobacter metallireducens (strain ATCC 53774 / DSM 7210 / GS-15).